Consider the following 943-residue polypeptide: Isoleucine--tRNA ligase (943 aa).

The 'HIGH' region motif lies at 59 to 69 (PYANGQIHLGH). E577 contributes to the L-isoleucyl-5'-AMP binding site. The 'KMSKS' region motif lies at 618–622 (KMSKS). Residue K621 participates in ATP binding. Residues C906, C909, C926, and C929 each coordinate Zn(2+).

This sequence belongs to the class-I aminoacyl-tRNA synthetase family. IleS type 1 subfamily. In terms of assembly, monomer. It depends on Zn(2+) as a cofactor.

The protein localises to the cytoplasm. The catalysed reaction is tRNA(Ile) + L-isoleucine + ATP = L-isoleucyl-tRNA(Ile) + AMP + diphosphate. Catalyzes the attachment of isoleucine to tRNA(Ile). As IleRS can inadvertently accommodate and process structurally similar amino acids such as valine, to avoid such errors it has two additional distinct tRNA(Ile)-dependent editing activities. One activity is designated as 'pretransfer' editing and involves the hydrolysis of activated Val-AMP. The other activity is designated 'posttransfer' editing and involves deacylation of mischarged Val-tRNA(Ile). The sequence is that of Isoleucine--tRNA ligase from Xylella fastidiosa (strain 9a5c).